The following is a 546-amino-acid chain: Immunoglobulin-like domain-containing receptor 1 (546 aa).

Residues Met-1–Ser-23 form the signal peptide. One can recognise an Ig-like V-type domain in the interval Leu-24–Lys-162. At Leu-24–His-167 the chain is on the extracellular side. A disulfide bridge connects residues Cys-45 and Cys-145. A helical membrane pass occupies residues Trp-168 to Cys-188. The Cytoplasmic portion of the chain corresponds to Trp-189–Ile-546. Residues Trp-399–Ile-546 are disordered. Residues Arg-442–Gln-457 are compositionally biased toward basic and acidic residues. Residues Arg-458 to Ser-467 show a composition bias toward basic residues. Phosphoserine is present on residues Ser-499 and Ser-501. The span at Gly-527–His-539 shows a compositional bias: basic and acidic residues.

It belongs to the immunoglobulin superfamily. LISCH7 family. In terms of assembly, homooligomer. Interacts with MARVELD2 and OCLN; the interaction is required to recruit MARVELD2 to tricellular contacts. Interacts (via C-terminus) with TRA2A, TRA2B and SRSF1. Interacts with PLSCR1. As to expression, mainly expressed in prostate and to a lower extent in testis, pancreas, kidney, heart and liver.

It is found in the cell membrane. The protein localises to the cell junction. It localises to the tight junction. Its subcellular location is the cytoplasm. The protein resides in the cytosol. Maintains epithelial barrier function by recruiting MARVELD2/tricellulin to tricellular tight junctions (tTJs). Crucial for normal hearing by maintaining the structural and functional integrity of tTJs, which are critical for the survival of auditory neurosensory HCs. Mediates fatty acids and lipoproteins-stimulated CCK/cholecystokinin secretion in the small intestine. In the inner ear, may regulate alternative pre-mRNA splicing via binding to TRA2A, TRA2B and SRSF1. In terms of biological role, (Microbial infection) Promotes influenza virus infection by inhibiting viral nucleoprotein NP binding to PLSCR1 and thereby PLSCR1-mediated antiviral activity. This chain is Immunoglobulin-like domain-containing receptor 1, found in Homo sapiens (Human).